We begin with the raw amino-acid sequence, 295 residues long: Nucleotide-binding protein llmg_1557 (295 aa).

Position 12–19 (12–19) interacts with ATP; sequence GMSGAGKT. 63–66 provides a ligand contact to GTP; the sequence is DMRS.

It belongs to the RapZ-like family.

In terms of biological role, displays ATPase and GTPase activities. The chain is Nucleotide-binding protein llmg_1557 from Lactococcus lactis subsp. cremoris (strain MG1363).